The following is a 299-amino-acid chain: UDP-N-acetylenolpyruvoylglucosamine reductase (299 aa).

Positions 28 to 193 constitute an FAD-binding PCMH-type domain; sequence KVGGPADILA…LSAKFELQAG (166 aa). Arg172 is an active-site residue. Ser222 acts as the Proton donor in catalysis. The active site involves Glu292.

This sequence belongs to the MurB family. FAD is required as a cofactor.

Its subcellular location is the cytoplasm. It catalyses the reaction UDP-N-acetyl-alpha-D-muramate + NADP(+) = UDP-N-acetyl-3-O-(1-carboxyvinyl)-alpha-D-glucosamine + NADPH + H(+). Its pathway is cell wall biogenesis; peptidoglycan biosynthesis. Cell wall formation. This chain is UDP-N-acetylenolpyruvoylglucosamine reductase, found in Lactococcus lactis subsp. cremoris (strain SK11).